The primary structure comprises 60 residues: Probable UDP-arabinopyranose mutase 1 (60 aa).

The protein belongs to the RGP family. Homopentamer or homohexamer. Requires Mn(2+) as cofactor. Mg(2+) serves as cofactor.

The protein localises to the secreted. It is found in the cell wall. Its subcellular location is the cell junction. The protein resides in the plasmodesma. It localises to the golgi apparatus. The catalysed reaction is UDP-beta-L-arabinofuranose = UDP-beta-L-arabinopyranose. Its function is as follows. Probable UDP-L-arabinose mutase involved in the biosynthesis of cell wall non-cellulosic polysaccharides. In Phoenix dactylifera (Date palm), this protein is Probable UDP-arabinopyranose mutase 1.